The sequence spans 465 residues: Ribulose bisphosphate carboxylase large chain (465 aa).

The residue at position 4 (Lys-4) is an N6,N6,N6-trimethyllysine. Asn-113 and Thr-163 together coordinate substrate. Lys-165 acts as the Proton acceptor in catalysis. Residue Lys-167 participates in substrate binding. Residues Lys-191, Asp-193, and Glu-194 each contribute to the Mg(2+) site. Lys-191 bears the N6-carboxylysine mark. Residue His-284 is the Proton acceptor of the active site. Residues Arg-285, His-317, and Ser-369 each coordinate substrate.

Belongs to the RuBisCO large chain family. Type I subfamily. In terms of assembly, heterohexadecamer of 8 large chains and 8 small chains; disulfide-linked. The disulfide link is formed within the large subunit homodimers. Mg(2+) is required as a cofactor. In terms of processing, the disulfide bond which can form in the large chain dimeric partners within the hexadecamer appears to be associated with oxidative stress and protein turnover.

The protein localises to the plastid. The protein resides in the chloroplast. The enzyme catalyses 2 (2R)-3-phosphoglycerate + 2 H(+) = D-ribulose 1,5-bisphosphate + CO2 + H2O. It carries out the reaction D-ribulose 1,5-bisphosphate + O2 = 2-phosphoglycolate + (2R)-3-phosphoglycerate + 2 H(+). Functionally, ruBisCO catalyzes two reactions: the carboxylation of D-ribulose 1,5-bisphosphate, the primary event in carbon dioxide fixation, as well as the oxidative fragmentation of the pentose substrate in the photorespiration process. Both reactions occur simultaneously and in competition at the same active site. The sequence is that of Ribulose bisphosphate carboxylase large chain from Humiria balsamifera (Tauroniro).